The primary structure comprises 87 residues: Putative regulatory protein CHY_1489 (87 aa).

The protein belongs to the RemA family.

This is Putative regulatory protein CHY_1489 from Carboxydothermus hydrogenoformans (strain ATCC BAA-161 / DSM 6008 / Z-2901).